A 225-amino-acid polypeptide reads, in one-letter code: NAD(P)H-quinone oxidoreductase subunit K, chloroplastic (225 aa).

Cys-43, Cys-44, Cys-108, and Cys-139 together coordinate [4Fe-4S] cluster.

It belongs to the complex I 20 kDa subunit family. NDH is composed of at least 16 different subunits, 5 of which are encoded in the nucleus. It depends on [4Fe-4S] cluster as a cofactor.

The protein resides in the plastid. Its subcellular location is the chloroplast thylakoid membrane. It carries out the reaction a plastoquinone + NADH + (n+1) H(+)(in) = a plastoquinol + NAD(+) + n H(+)(out). It catalyses the reaction a plastoquinone + NADPH + (n+1) H(+)(in) = a plastoquinol + NADP(+) + n H(+)(out). Functionally, NDH shuttles electrons from NAD(P)H:plastoquinone, via FMN and iron-sulfur (Fe-S) centers, to quinones in the photosynthetic chain and possibly in a chloroplast respiratory chain. The immediate electron acceptor for the enzyme in this species is believed to be plastoquinone. Couples the redox reaction to proton translocation, and thus conserves the redox energy in a proton gradient. The chain is NAD(P)H-quinone oxidoreductase subunit K, chloroplastic from Nicotiana tabacum (Common tobacco).